Consider the following 501-residue polypeptide: Sodium-coupled neutral amino acid symporter 2 (501 aa).

A disordered region spans residues 1-26; it reads MSSAEMGKFDISPDEDSSSYSSNSND. Residues 1–77 are Cytoplasmic-facing; that stretch reads MSSAEMGKFD…HPGTTSFGMS (77 aa). Residues 1–97 form a regulates protein turnover upon amino acid deprivation region; it reads MSSAEMGKFD…SGILGLSYAM (97 aa). A helical membrane pass occupies residues 78–97; the sequence is VFNLSNAIVGSGILGLSYAM. Na(+) is bound at residue Asn-83. The Extracellular segment spans residues 98–103; the sequence is ANTGIA. The helical transmembrane segment at 104–124 threads the bilayer; the sequence is LFVILLLVVSILSLYSVHLLL. Over 125-159 the chain is Cytoplasmic; the sequence is KTANEGGSLLYEQLGMKAFGMPGKLAASGSITMQN. A helical transmembrane segment spans residues 160 to 178; the sequence is IGAMSSYLFIVKYELPLVI. Over 179-189 the chain is Extracellular; sequence KTFMNIEENAG. A helical membrane pass occupies residues 190–210; it reads HWYLNGDYLVLLVSVILILPL. The Cytoplasmic portion of the chain corresponds to 211–218; it reads SLLKNLGY. Residues 219–239 traverse the membrane as a helical segment; sequence LGYTSGFSLLCMVFFLIVVIW. Residues 240–287 lie on the Extracellular side of the membrane; it reads KMFQIPCPMESDIINATLINATLAPFADENITISDACKPEYFIFNSQT. A disulfide bridge connects residues Cys-246 and Cys-276. N-linked (GlcNAc...) asparagine glycosylation is found at Asn-254 and Asn-259. The chain crosses the membrane as a helical span at residues 288 to 308; that stretch reads VYAVPILTFSFVCHPAILPIY. The Cytoplasmic portion of the chain corresponds to 309-324; that stretch reads EELKSRSRKRMMNVSY. The helical transmembrane segment at 325 to 345 threads the bilayer; it reads VSFFAMFLMYLLAALFGYLTF. Over 346 to 366 the chain is Extracellular; it reads YGRVESELLHTYSAFLGADIL. The chain crosses the membrane as a helical span at residues 367–387; the sequence is LLIVRLAVLMAVTLTVPVVIF. Position 381 (Thr-381) interacts with Na(+). Topologically, residues 388 to 408 are cytoplasmic; sequence PIRSSVTQLLWAGKEFSWWRH. A helical membrane pass occupies residues 409–429; the sequence is CSITVVLLAFTNVLVIFVPTI. The Extracellular segment spans residues 430–431; the sequence is RD. Residues 432–452 traverse the membrane as a helical segment; sequence IFGFIGASAAAMLIFILPSAF. Residues 453 to 467 lie on the Cytoplasmic side of the membrane; the sequence is YIKLVKKEPMKSVQK. Residues 468 to 490 traverse the membrane as a helical segment; sequence IGAALFFLSGILVMTGCMTLIIL. Residues 491-501 lie on the Extracellular side of the membrane; it reads DWIHTDASDGH.

The protein belongs to the amino acid/polyamine transporter 2 family.

The protein localises to the cell membrane. The enzyme catalyses L-alanine(in) + Na(+)(in) = L-alanine(out) + Na(+)(out). The catalysed reaction is glycine(in) + Na(+)(in) = glycine(out) + Na(+)(out). It carries out the reaction L-serine(in) + Na(+)(in) = L-serine(out) + Na(+)(out). It catalyses the reaction L-proline(in) + Na(+)(in) = L-proline(out) + Na(+)(out). The enzyme catalyses L-methionine(in) + Na(+)(in) = L-methionine(out) + Na(+)(out). The catalysed reaction is L-histidine(in) + Na(+)(in) = L-histidine(out) + Na(+)(out). It carries out the reaction L-asparagine(in) + Na(+)(in) = L-asparagine(out) + Na(+)(out). It catalyses the reaction L-glutamine(in) + Na(+)(in) = L-glutamine(out) + Na(+)(out). The enzyme catalyses L-threonine(in) + Na(+)(in) = L-threonine(out) + Na(+)(out). The catalysed reaction is L-leucine(in) + Na(+)(in) = L-leucine(out) + Na(+)(out). It carries out the reaction L-phenylalanine(in) + Na(+)(in) = L-phenylalanine(out) + Na(+)(out). Inhibited by N-methyl-D-glucamine. Inhibited by choline. Allosteric regulation of sodium ions binding by pH. Its function is as follows. Symporter that cotransports neutral amino acids and sodium ions from the extracellular to the intracellular side of the cell membrane. The transport is pH-sensitive, Li(+)-intolerant, electrogenic, driven by the Na(+) electrochemical gradient and cotransports of neutral amino acids and sodium ions with a stoichiometry of 1:1. The polypeptide is Sodium-coupled neutral amino acid symporter 2 (Gallus gallus (Chicken)).